The following is a 483-amino-acid chain: MIPVILSGGSGSRLWPLSRKQFPKQFLALTGEHTLFQQTLQRLVFEGMQEPIVVCNKDHRFIVNEQLAALNLETQAILMEPFGRNTAPAVALTAMKLVNEGNDGLMLVLPADHVIEDQKALQRALALATVTAERGEMVLFGVPANKPETGYGYIKSTADALLPEGVSRVSQFVEKPDEKRAKEFVEAGGYYWNSGMFLFRASRFLEELKKHDPDIYDTCLLTLERSVQDGDALEIDASTFACCPDNSIDYAVMEKTQRACVVPLSAGWSDVGCWSSLWEVNAKDAHGNVTKGDVVIQDSRNCMIHGNGKLVSVIGLDNIVVVETKDAMMIAHKDKVQGVKQMVATLNEQGRTETQNHLEVYRPWGSYDSVDMGGRFQVKRISVKPGACLSLQMHHHRAEHWIVVSGTAQVTCDENVFLLTENQSTYIPIASVHRLRNPGKIPLEIIEVQSGSYLGEDDIERFEDIYGRSNALEAGVKTQTIAR.

It belongs to the mannose-6-phosphate isomerase type 2 family. Monomer. Requires Co(2+) as cofactor.

The catalysed reaction is D-mannose 6-phosphate = D-fructose 6-phosphate. The enzyme catalyses alpha-D-mannose 1-phosphate + GTP + H(+) = GDP-alpha-D-mannose + diphosphate. Its pathway is nucleotide-sugar biosynthesis; GDP-alpha-D-mannose biosynthesis; GDP-alpha-D-mannose from alpha-D-mannose 1-phosphate (GTP route): step 1/1. The protein operates within nucleotide-sugar biosynthesis; GDP-alpha-D-mannose biosynthesis; alpha-D-mannose 1-phosphate from D-fructose 6-phosphate: step 1/2. Its function is as follows. Produces a precursor for alginate polymerization. The alginate layer provides a protective barrier against host immune defenses and antibiotics. The sequence is that of Alginate biosynthesis protein AlgA (algA) from Pseudomonas syringae pv. tomato (strain ATCC BAA-871 / DC3000).